The following is a 746-amino-acid chain: Zinc finger protein 366 (746 aa).

Positions Met1–Leu64 are disordered. C2H2-type zinc fingers lie at residues Trp250–His272, His278–His300, His306–His328, His334–His356, Asn362–His384, Tyr390–His412, Tyr418–His440, His446–His468, Tyr474–His496, Phe502–His524, and Phe530–His553. The tract at residues Gly452 to Ile746 is interaction with NRIP1. The PXDLS motif lies at Pro587–Ser591. The interval Pro587 to Glu689 is disordered. The segment covering Cys613–Tyr627 has biased composition (acidic residues). Basic and acidic residues predominate over residues Glu675–Glu689.

Interacts with ESR1 and NRIP1. Interacts (via PXDLS motif) with CTBP1. Expressed in immature and mature dendritic cells (DCs).

The protein localises to the nucleus. Its function is as follows. Has transcriptional repression activity. Acts as a corepressor of ESR1; the function seems to involve CTBP1 and histone deacetylases. In Mus musculus (Mouse), this protein is Zinc finger protein 366.